The primary structure comprises 241 residues: Probable transcriptional regulatory protein NE0210 (241 aa).

It belongs to the TACO1 family.

The protein resides in the cytoplasm. This chain is Probable transcriptional regulatory protein NE0210, found in Nitrosomonas europaea (strain ATCC 19718 / CIP 103999 / KCTC 2705 / NBRC 14298).